Reading from the N-terminus, the 199-residue chain is Superoxide dismutase [Mn/Fe] (199 aa).

Fe(3+) is bound by residues histidine 27, histidine 81, aspartate 161, and histidine 165. Mn(2+)-binding residues include histidine 27, histidine 81, aspartate 161, and histidine 165.

It belongs to the iron/manganese superoxide dismutase family. In terms of assembly, homodimer. It depends on Mn(2+) as a cofactor. The cofactor is Fe(3+).

It catalyses the reaction 2 superoxide + 2 H(+) = H2O2 + O2. Destroys superoxide anion radicals which are normally produced within the cells and which are toxic to biological systems. Catalyzes the dismutation of superoxide anion radicals into O2 and H2O2 by successive reduction and oxidation of the transition metal ion at the active site. The chain is Superoxide dismutase [Mn/Fe] (sodA) from Staphylococcus epidermidis.